A 574-amino-acid chain; its full sequence is Probable inactive serine/threonine-protein kinase slob2 (574 aa).

A helical transmembrane segment spans residues Tyr-6–Leu-26. One can recognise a Protein kinase domain in the interval Tyr-166 to Arg-346. A glycan (N-linked (GlcNAc...) asparagine) is linked at Asn-358. A disordered region spans residues Ser-366–Lys-386. N-linked (GlcNAc...) asparagine glycans are attached at residues Asn-440, Asn-449, Asn-453, Asn-456, Asn-464, Asn-470, Asn-477, and Asn-483. The span at Thr-450 to Pro-493 shows a compositional bias: low complexity. Residues Thr-450 to Ser-574 form a disordered region. Pro residues predominate over residues Ile-494–Ala-539. Residues Leu-546–Ser-556 show a composition bias toward low complexity.

The protein belongs to the protein kinase superfamily. Ser/Thr protein kinase family.

The protein localises to the membrane. The sequence is that of Probable inactive serine/threonine-protein kinase slob2 (slob2) from Dictyostelium discoideum (Social amoeba).